Reading from the N-terminus, the 477-residue chain is MNFETVIGLEVHVELSTNSKIFSPASTKFGGDPNSNTNVIDWSLPGVLPVMNKGVIDSGIKAALALNMDIHKSMHFDRKNYFYPDNPKAYQISQFDEPIGYNGSIEIELEDGHKATIRIERAHLEEDAGKNTHGTDGYSYVDLNRQGVPLIEIVSEADMRTPEEAYAYLTALKEAILYTGISDVKMEEGSMRCDANVSLRPYGQEAFGVKTEVKNMNSFSNVKKALDFEVARQAKILRAGGEIRQETRRFNDKTGETILMRVKEGASDYRYFPEPDVPRFEISDEWIEQMRASLPMTATARRAHYINDLGLSDYDARQLTATKEVSDFFDQAIKFDTDPKLVSNWLQGEVAQYLNSEKKELHEIGLTPENLTEMIRLISDGTISSKIAKKVFIELAKNGGSAEEFVKKAGLVQISDPDLLLPIIHEVFAKNEQSVADYRGGKQNAAKALVGQLMKATKGQANPTVAQKLLYQELDNF.

This sequence belongs to the GatB/GatE family. GatB subfamily. Heterotrimer of A, B and C subunits.

The catalysed reaction is L-glutamyl-tRNA(Gln) + L-glutamine + ATP + H2O = L-glutaminyl-tRNA(Gln) + L-glutamate + ADP + phosphate + H(+). It carries out the reaction L-aspartyl-tRNA(Asn) + L-glutamine + ATP + H2O = L-asparaginyl-tRNA(Asn) + L-glutamate + ADP + phosphate + 2 H(+). Allows the formation of correctly charged Asn-tRNA(Asn) or Gln-tRNA(Gln) through the transamidation of misacylated Asp-tRNA(Asn) or Glu-tRNA(Gln) in organisms which lack either or both of asparaginyl-tRNA or glutaminyl-tRNA synthetases. The reaction takes place in the presence of glutamine and ATP through an activated phospho-Asp-tRNA(Asn) or phospho-Glu-tRNA(Gln). The sequence is that of Aspartyl/glutamyl-tRNA(Asn/Gln) amidotransferase subunit B from Lactococcus lactis subsp. cremoris (strain MG1363).